The sequence spans 177 residues: MSEFITVARPYAKAAFDFAVEHQSVERWQDMLAFAAEVTKNEQMAELLSGALAPETLAESFIAVCGEQLDENSQNLIRVMAENGRLNALPDVLEQFIHLRAVSEATAEVDVISAAALSEQQLAKISAAMEKRLSRKVKLNCKIDKSVMAGVIIRAGDMVIDGSVRGRLERLADVLQS.

It belongs to the ATPase delta chain family. F-type ATPases have 2 components, F(1) - the catalytic core - and F(0) - the membrane proton channel. F(1) has five subunits: alpha(3), beta(3), gamma(1), delta(1), epsilon(1). F(0) has three main subunits: a(1), b(2) and c(10-14). The alpha and beta chains form an alternating ring which encloses part of the gamma chain. F(1) is attached to F(0) by a central stalk formed by the gamma and epsilon chains, while a peripheral stalk is formed by the delta and b chains.

The protein localises to the cell inner membrane. In terms of biological role, f(1)F(0) ATP synthase produces ATP from ADP in the presence of a proton or sodium gradient. F-type ATPases consist of two structural domains, F(1) containing the extramembraneous catalytic core and F(0) containing the membrane proton channel, linked together by a central stalk and a peripheral stalk. During catalysis, ATP synthesis in the catalytic domain of F(1) is coupled via a rotary mechanism of the central stalk subunits to proton translocation. Functionally, this protein is part of the stalk that links CF(0) to CF(1). It either transmits conformational changes from CF(0) to CF(1) or is implicated in proton conduction. This is ATP synthase subunit delta from Shigella dysenteriae serotype 1 (strain Sd197).